Consider the following 669-residue polypeptide: MSKEIAKKRIEELRDLLNTFNYQYHVLDNPSVSDAEYDRDMQELIKLEAENPEFMSEDSPSIRVGGTVLDIFEKVTHKSPMLSLGNAFNEGDLRDFDRRVHQGIDDANVRYICELKIDGLAVSLHYEKGRFIQGATRGDGITGEDITQNLKTIKAIPLRLNEEVTLEARGEAYMPKRSFVKLNEEKEQNGEDVFANPRNAAAGSIRQLDPKIAAKRNLSMFVYGLANVEEKTIPSHSESLDFLGELGFKTNPNRRTCETIEDVIAYVEEWQEKRPHLDYEIDGIVIKVDDVAIQESLGTTAKSPRWAIAYKFPAEEVVTRLTGIELSVGRTGVVTPTAELEPVRVAGTIVRRASLHNEDLIREKDIRIGDYVVVKKAGDIIPEVVNVIFDKRTGEEEEYHMPTHCPACESELVRLEEEVALRCINPTCPAQIREGLIHFVSRNAMNIDGLGERVITQLFDADYIRTFADLYSLTKEQLLELERFGEKSATNLVQAIENSKENSLERLLFGLGIRHVGAKAARTFAEHFETMDELVKATEEELKTINEIGEKMAQSVVTYFDNEDVLELLQQFKEYGVNMAYKGIKIADLQNVESYFAGKTVVLTGKLEVMGRSEAKKKIEALGGKVTGSVSKSTDLLVAGEAAGSKLAQAEKHNVEVWNEERFLQELNK.

NAD(+)-binding positions include 34 to 38 (DAEYD), 83 to 84 (SL), and glutamate 114. Residue lysine 116 is the N6-AMP-lysine intermediate of the active site. Residues arginine 137, glutamate 171, lysine 287, and lysine 311 each contribute to the NAD(+) site. 4 residues coordinate Zn(2+): cysteine 405, cysteine 408, cysteine 423, and cysteine 428. The BRCT domain occupies 591–669 (NVESYFAGKT…EERFLQELNK (79 aa)).

Belongs to the NAD-dependent DNA ligase family. LigA subfamily. Requires Mg(2+) as cofactor. Mn(2+) is required as a cofactor.

It carries out the reaction NAD(+) + (deoxyribonucleotide)n-3'-hydroxyl + 5'-phospho-(deoxyribonucleotide)m = (deoxyribonucleotide)n+m + AMP + beta-nicotinamide D-nucleotide.. In terms of biological role, DNA ligase that catalyzes the formation of phosphodiester linkages between 5'-phosphoryl and 3'-hydroxyl groups in double-stranded DNA using NAD as a coenzyme and as the energy source for the reaction. It is essential for DNA replication and repair of damaged DNA. This is DNA ligase from Bacillus mycoides (strain KBAB4) (Bacillus weihenstephanensis).